The sequence spans 854 residues: Envelope glycoprotein gp160 (854 aa).

The signal sequence occupies residues 1–31 (MKVMEKKKRDWNSLSIITIITIILLTPCLTS). Residues 32-675 (ELWVTVYYGV…ITKWLWYIKI (644 aa)) are Extracellular-facing. 6 disulfides stabilise this stretch: Cys53/Cys73, Cys118/Cys203, Cys125/Cys194, Cys130/Cys155, Cys216/Cys245, and Cys226/Cys237. The V1 stretch occupies residues 130 to 154 (CSKANFSQAKNLTNQTSSPPLEMKN). Residues Asn134, Asn140, Asn143, Asn154, Asn158, Asn186, and Asn195 are each glycosylated (N-linked (GlcNAc...) asparagine; by host). The interval 155–194 (CSFNVTTELRDKKKQVYSLFYVEDVVNLGNENNTYRIINC) is V2. N-linked (GlcNAc...) asparagine; by host glycans are attached at residues Asn239, Asn260, Asn267, Asn274, Asn299, Asn331, Asn336, Asn351, and Asn356. The interval 294–327 (CHRPGNNTRGEVQIGPGMTFYNIENVVGDTRSAY) is V3. An intrachain disulfide couples Cys294 to Cys328. A CD4-binding loop region spans residues 362-372 (ASGGDPEVTHH). 2 disulfides stabilise this stretch: Cys376–Cys429 and Cys383–Cys402. A V4 region spans residues 383–402 (CNTSQIFTDNITNGIIILPC). N-linked (GlcNAc...) asparagine; by host glycans are attached at residues Asn384, Asn392, Asn426, Asn432, Asn446, and Asn450. V5 regions lie at residues 445–456 (TNNSGNLTFRPT) and 447–456 (NSGNLTFRPT). A fusion peptide region spans residues 501 to 522 (AAFGLGALFLGFLGAAGSTMGA). The segment at 564–582 (KQLQARLLAVERYLQDQQI) is immunosuppression. Cysteines 588 and 594 form a disulfide. N-linked (GlcNAc...) asparagine; by host glycosylation is found at Asn601, Asn608, Asn616, and Asn628. Positions 624–658 (KLVSNYTGKIFGLLEEAQSQQEKNERDLLELDQWA) form a coiled coil. Positions 653–674 (ELDQWASLWNWFDITKWLWYIK) are MPER; binding to GalCer. A helical transmembrane segment spans residues 676-696 (FLMAVGGIIGLRIIMTVFSVV). Residues 697–854 (RRVRQGYSPL…IRQGLERALL (158 aa)) lie on the Cytoplasmic side of the membrane. Positions 703–706 (YSPL) match the YXXL motif; contains endocytosis signal motif. The Di-leucine internalization motif motif lies at 853–854 (LL).

It belongs to the HIV-1 env protein family. The mature envelope protein (Env) consists of a homotrimer of non-covalently associated gp120-gp41 heterodimers. The resulting complex protrudes from the virus surface as a spike. There seems to be as few as 10 spikes on the average virion. Interacts with host CD4, CCR5 and CXCR4. Gp120 also interacts with the C-type lectins CD209/DC-SIGN and CLEC4M/DC-SIGNR (collectively referred to as DC-SIGN(R)). Gp120 and gp41 interact with GalCer. Gp120 interacts with host ITGA4/ITGB7 complex; on CD4+ T-cells, this interaction results in rapid activation of integrin ITGAL/LFA-1, which facilitates efficient cell-to-cell spreading of HIV-1. Gp120 interacts with cell-associated heparan sulfate; this interaction increases virus infectivity on permissive cells and may be involved in infection of CD4- cells. As to quaternary structure, the mature envelope protein (Env) consists of a homotrimer of non-covalently associated gp120-gp41 heterodimers. The resulting complex protrudes from the virus surface as a spike. There seems to be as few as 10 spikes on the average virion. In terms of processing, highly glycosylated by host. The high number of glycan on the protein is reffered to as 'glycan shield' because it contributes to hide protein sequence from adaptive immune system. Post-translationally, palmitoylation of the transmembrane protein and of Env polyprotein (prior to its proteolytic cleavage) is essential for their association with host cell membrane lipid rafts. Palmitoylation is therefore required for envelope trafficking to classical lipid rafts, but not for viral replication. Specific enzymatic cleavages in vivo yield mature proteins. Envelope glycoproteins are synthesized as an inactive precursor that is heavily N-glycosylated and processed likely by host cell furin in the Golgi to yield the mature SU and TM proteins. The cleavage site between SU and TM requires the minimal sequence [KR]-X-[KR]-R. About 2 of the 9 disulfide bonds of gp41 are reduced by P4HB/PDI, following binding to CD4 receptor.

It localises to the virion membrane. Its subcellular location is the host cell membrane. It is found in the host endosome membrane. Its function is as follows. Attaches the virus to the host lymphoid cell by binding to the primary receptor CD4. This interaction induces a structural rearrangement creating a high affinity binding site for a chemokine coreceptor like CXCR4 and/or CCR5. Acts as a ligand for CD209/DC-SIGN and CLEC4M/DC-SIGNR, which are respectively found on dendritic cells (DCs), and on endothelial cells of liver sinusoids and lymph node sinuses. These interactions allow capture of viral particles at mucosal surfaces by these cells and subsequent transmission to permissive cells. HIV subverts the migration properties of dendritic cells to gain access to CD4+ T-cells in lymph nodes. Virus transmission to permissive T-cells occurs either in trans (without DCs infection, through viral capture and transmission), or in cis (following DCs productive infection, through the usual CD4-gp120 interaction), thereby inducing a robust infection. In trans infection, bound virions remain infectious over days and it is proposed that they are not degraded, but protected in non-lysosomal acidic organelles within the DCs close to the cell membrane thus contributing to the viral infectious potential during DCs' migration from the periphery to the lymphoid tissues. On arrival at lymphoid tissues, intact virions recycle back to DCs' cell surface allowing virus transmission to CD4+ T-cells. Functionally, acts as a class I viral fusion protein. Under the current model, the protein has at least 3 conformational states: pre-fusion native state, pre-hairpin intermediate state, and post-fusion hairpin state. During fusion of viral and target intracellular membranes, the coiled coil regions (heptad repeats) assume a trimer-of-hairpins structure, positioning the fusion peptide in close proximity to the C-terminal region of the ectodomain. The formation of this structure appears to drive apposition and subsequent fusion of viral and target cell membranes. Complete fusion occurs in host cell endosomes and is dynamin-dependent, however some lipid transfer might occur at the plasma membrane. The virus undergoes clathrin-dependent internalization long before endosomal fusion, thus minimizing the surface exposure of conserved viral epitopes during fusion and reducing the efficacy of inhibitors targeting these epitopes. Membranes fusion leads to delivery of the nucleocapsid into the cytoplasm. Oligomerizes in the host endoplasmic reticulum into predominantly trimers. In a second time, gp160 transits in the host Golgi, where glycosylation is completed. The precursor is then proteolytically cleaved in the trans-Golgi and thereby activated by cellular furin or furin-like proteases to produce gp120 and gp41. This chain is Envelope glycoprotein gp160, found in Pan (chimpanzees).